The chain runs to 465 residues: ATP-dependent protease ATPase subunit HslU (465 aa).

Residues Val-18, Gly-60–Glu-65, Asp-277, Glu-342, and Arg-414 each bind ATP.

It belongs to the ClpX chaperone family. HslU subfamily. A double ring-shaped homohexamer of HslV is capped on each side by a ring-shaped HslU homohexamer. The assembly of the HslU/HslV complex is dependent on binding of ATP.

It localises to the cytoplasm. In terms of biological role, ATPase subunit of a proteasome-like degradation complex; this subunit has chaperone activity. The binding of ATP and its subsequent hydrolysis by HslU are essential for unfolding of protein substrates subsequently hydrolyzed by HslV. HslU recognizes the N-terminal part of its protein substrates and unfolds these before they are guided to HslV for hydrolysis. The protein is ATP-dependent protease ATPase subunit HslU of Caldicellulosiruptor saccharolyticus (strain ATCC 43494 / DSM 8903 / Tp8T 6331).